Consider the following 209-residue polypeptide: Large ribosomal subunit protein uL3 (209 aa).

Residues 118 to 150 (GFQGAIKRHGQSRGPMTHGSRYHRRPGSMGPVD) are disordered.

It belongs to the universal ribosomal protein uL3 family. In terms of assembly, part of the 50S ribosomal subunit. Forms a cluster with proteins L14 and L19.

In terms of biological role, one of the primary rRNA binding proteins, it binds directly near the 3'-end of the 23S rRNA, where it nucleates assembly of the 50S subunit. The protein is Large ribosomal subunit protein uL3 of Bacillus pumilus (strain SAFR-032).